Reading from the N-terminus, the 189-residue chain is MSLRLITWDIKDTLLRVRVPVGQQYFAEAKRQGLCMDPGSLETSFRNAYRTHSRLFPNYGLAQGMDSRQWWLDVVLQTFRLSGAEDDETVRSVAQQLYQDFSTARNWAVVPGAREALDSCKGLGLKMAVISNFDRRLEEQPMKDEPAADHMGYKRYPAASPGAGGAAVFCRSQEARSLYGPRFLGDIVP.

Belongs to the HAD-like hydrolase superfamily.

The polypeptide is Haloacid dehalogenase-like hydrolase domain-containing protein 3 (hdhd3) (Xenopus tropicalis (Western clawed frog)).